The primary structure comprises 505 residues: Deoxyguanosinetriphosphate triphosphohydrolase (505 aa).

The HD domain maps to 66–273 (RLTHSMEVQQ…MEAADDISYC (208 aa)).

Belongs to the dGTPase family. Type 1 subfamily. In terms of assembly, homotetramer. The cofactor is Mg(2+).

It catalyses the reaction dGTP + H2O = 2'-deoxyguanosine + triphosphate + H(+). Functionally, dGTPase preferentially hydrolyzes dGTP over the other canonical NTPs. The chain is Deoxyguanosinetriphosphate triphosphohydrolase from Salmonella arizonae (strain ATCC BAA-731 / CDC346-86 / RSK2980).